Here is a 128-residue protein sequence, read N- to C-terminus: MYDNLKSLGITNPEEIDRYSLRQEANNDILKIYFQKDRGEFFAKSVKFKYPRQRKTVVADGIGQGYKEVQEISPNLRYVIDELDQICQRDRSELDLKRKILDDLRHLESVVANKISEIEADLDKLTRK.

It belongs to the UPF0325 family.

The protein is UPF0325 protein YaeH of Salmonella agona (strain SL483).